The following is a 241-amino-acid chain: Uridylate kinase (241 aa).

An ATP-binding site is contributed by 14 to 17 (KLSG). Residues 22–27 (GNQGFG) form an involved in allosteric activation by GTP region. Gly56 lines the UMP pocket. Gly57 and Arg61 together coordinate ATP. Residues Asp76 and 137–144 (TGNPYFTT) each bind UMP. Positions 164, 170, and 173 each coordinate ATP.

The protein belongs to the UMP kinase family. As to quaternary structure, homohexamer.

Its subcellular location is the cytoplasm. The enzyme catalyses UMP + ATP = UDP + ADP. It participates in pyrimidine metabolism; CTP biosynthesis via de novo pathway; UDP from UMP (UMPK route): step 1/1. Allosterically activated by GTP. Inhibited by UTP. Catalyzes the reversible phosphorylation of UMP to UDP. The protein is Uridylate kinase of Syntrophotalea carbinolica (strain DSM 2380 / NBRC 103641 / GraBd1) (Pelobacter carbinolicus).